The chain runs to 293 residues: 4-hydroxy-tetrahydrodipicolinate synthase (293 aa).

Thr44 provides a ligand contact to pyruvate. The active-site Proton donor/acceptor is the Tyr132. The Schiff-base intermediate with substrate role is filled by Lys160. A pyruvate-binding site is contributed by Ile202.

This sequence belongs to the DapA family. Homotetramer; dimer of dimers.

The protein resides in the cytoplasm. The enzyme catalyses L-aspartate 4-semialdehyde + pyruvate = (2S,4S)-4-hydroxy-2,3,4,5-tetrahydrodipicolinate + H2O + H(+). It functions in the pathway amino-acid biosynthesis; L-lysine biosynthesis via DAP pathway; (S)-tetrahydrodipicolinate from L-aspartate: step 3/4. Catalyzes the condensation of (S)-aspartate-beta-semialdehyde [(S)-ASA] and pyruvate to 4-hydroxy-tetrahydrodipicolinate (HTPA). The protein is 4-hydroxy-tetrahydrodipicolinate synthase of Pelagibacter ubique (strain HTCC1062).